The chain runs to 209 residues: Ribosomal RNA large subunit methyltransferase E (209 aa).

5 residues coordinate S-adenosyl-L-methionine: Gly-63, Trp-65, Asp-83, Asp-99, and Asp-124. Residue Lys-164 is the Proton acceptor of the active site.

This sequence belongs to the class I-like SAM-binding methyltransferase superfamily. RNA methyltransferase RlmE family.

It localises to the cytoplasm. The catalysed reaction is uridine(2552) in 23S rRNA + S-adenosyl-L-methionine = 2'-O-methyluridine(2552) in 23S rRNA + S-adenosyl-L-homocysteine + H(+). Functionally, specifically methylates the uridine in position 2552 of 23S rRNA at the 2'-O position of the ribose in the fully assembled 50S ribosomal subunit. The polypeptide is Ribosomal RNA large subunit methyltransferase E (Shewanella denitrificans (strain OS217 / ATCC BAA-1090 / DSM 15013)).